Consider the following 506-residue polypeptide: Ribose import ATP-binding protein RbsA 2 (506 aa).

ABC transporter domains lie at L7–P242 and E250–N497. G39 to S46 lines the ATP pocket.

It belongs to the ABC transporter superfamily. Ribose importer (TC 3.A.1.2.1) family. As to quaternary structure, the complex is composed of an ATP-binding protein (RbsA), two transmembrane proteins (RbsC) and a solute-binding protein (RbsB).

It localises to the cell inner membrane. The enzyme catalyses D-ribose(out) + ATP + H2O = D-ribose(in) + ADP + phosphate + H(+). Functionally, part of the ABC transporter complex RbsABC involved in ribose import. Responsible for energy coupling to the transport system. The sequence is that of Ribose import ATP-binding protein RbsA 2 from Escherichia coli O157:H7.